Consider the following 72-residue polypeptide: MLIPWQDLSPETLENLIESFVLREGTDYGEHERTLEQKVSDVKRQLQCGEAVLVWSELHETVNIMPRSQFRE.

The protein belongs to the UPF0270 family.

In Escherichia coli (strain UTI89 / UPEC), this protein is UPF0270 protein YheU.